The sequence spans 151 residues: Ubiquitin-conjugating enzyme E2 W (151 aa).

Met1 participates in a covalent cross-link: Peptide (Met-Gly) (interchain with G-Cter in ubiquitin). The 149-residue stretch at 3–151 (SMQKRLQKEL…TKWWYHDDTC (149 aa)) folds into the UBC core domain. The active-site Glycyl thioester intermediate is the Cys91.

It belongs to the ubiquitin-conjugating enzyme family. In terms of assembly, homodimer. Interacts with FANCL. Interacts with STUB1/CHIP. In terms of processing, ubiquitinated in vitro in the presence of FANCL. Autoubiquitinated at Met-1.

It is found in the nucleus. It catalyses the reaction S-ubiquitinyl-[E1 ubiquitin-activating enzyme]-L-cysteine + [E2 ubiquitin-conjugating enzyme]-L-cysteine = [E1 ubiquitin-activating enzyme]-L-cysteine + S-ubiquitinyl-[E2 ubiquitin-conjugating enzyme]-L-cysteine.. It carries out the reaction S-ubiquitinyl-[E1 ubiquitin-activating enzyme]-L-cysteine + [acceptor protein]-N-terminal-amino acid = [E1 ubiquitin-activating enzyme]-L-cysteine + N-terminal-ubiquitinyl-[acceptor protein].. It functions in the pathway protein modification; protein ubiquitination. Its function is as follows. Accepts ubiquitin from the E1 complex and catalyzes its covalent attachment to other proteins. Specifically monoubiquitinates the N-terminus of various substrates, including ATXN3, MAPT/TAU, POLR2H/RPB8 and STUB1/CHIP, by recognizing backbone atoms of disordered N-termini. Involved in degradation of misfolded chaperone substrates by mediating monoubiquitination of STUB1/CHIP, leading to recruitment of ATXN3 to monoubiquitinated STUB1/CHIP, and restriction of the length of ubiquitin chain attached to STUB1/CHIP substrates by ATXN3. After UV irradiation, but not after mitomycin-C (MMC) treatment, acts as a specific E2 ubiquitin-conjugating enzyme for the Fanconi anemia complex by associating with E3 ubiquitin-protein ligase FANCL and catalyzing monoubiquitination of FANCD2, a key step in the DNA damage pathway. In vitro catalyzes 'Lys-11'-linked polyubiquitination. UBE2W-catalyzed ubiquitination also occurs in the presence of inactive RING/U-box type E3s, i.e. lacking the active site cysteine residues to form thioester bonds with ubiquitin, or even in the absence of E3, albeit at a slower rate. The sequence is that of Ubiquitin-conjugating enzyme E2 W (UBE2W) from Bos taurus (Bovine).